The chain runs to 481 residues: Cysteine--tRNA ligase (481 aa).

Cysteine 27 provides a ligand contact to Zn(2+). The 'HIGH' region motif lies at 29–39; that stretch reads PTVYNYAHIGN. Zn(2+)-binding residues include cysteine 222, histidine 247, and glutamate 251. Residues 279–283 carry the 'KMSKS' region motif; sequence KMSKS. Residue lysine 282 participates in ATP binding.

The protein belongs to the class-I aminoacyl-tRNA synthetase family. As to quaternary structure, monomer. The cofactor is Zn(2+).

It localises to the cytoplasm. It carries out the reaction tRNA(Cys) + L-cysteine + ATP = L-cysteinyl-tRNA(Cys) + AMP + diphosphate. The sequence is that of Cysteine--tRNA ligase from Borrelia hermsii (strain HS1 / DAH).